Consider the following 141-residue polypeptide: Hemoglobin subunit alpha (141 aa).

Residues 1–141 (VLSPADKANI…VSTVLTSKYR (141 aa)) form the Globin domain. S3 bears the Phosphoserine mark. N6-succinyllysine is present on residues K7 and K11. K16 carries the post-translational modification N6-acetyllysine; alternate. At K16 the chain carries N6-succinyllysine; alternate. A Phosphotyrosine modification is found at Y24. At S35 the chain carries Phosphoserine. K40 bears the N6-succinyllysine mark. At S49 the chain carries Phosphoserine. H58 provides a ligand contact to O2. H87 contacts heme b. S102 is modified (phosphoserine). T108 bears the Phosphothreonine mark. Residues S124 and S131 each carry the phosphoserine modification. Phosphothreonine occurs at positions 134 and 137. S138 carries the post-translational modification Phosphoserine.

This sequence belongs to the globin family. Heterotetramer of two alpha chains and two beta chains. Red blood cells.

Involved in oxygen transport from the lung to the various peripheral tissues. In terms of biological role, hemopressin acts as an antagonist peptide of the cannabinoid receptor CNR1. Hemopressin-binding efficiently blocks cannabinoid receptor CNR1 and subsequent signaling. The chain is Hemoglobin subunit alpha (HBA) from Meles meles (Eurasian badger).